We begin with the raw amino-acid sequence, 311 residues long: Pantothenate synthetase (311 aa).

An ATP-binding site is contributed by 43 to 50; that stretch reads MGALHEGH. The active-site Proton donor is His50. Residue Gln75 coordinates (R)-pantoate. Gln75 is a beta-alanine binding site. Position 161–164 (161–164) interacts with ATP; the sequence is GEKD. Gln167 is a (R)-pantoate binding site. ATP-binding positions include Val190 and 198–201; that span reads MSSR.

This sequence belongs to the pantothenate synthetase family. Homodimer.

It localises to the cytoplasm. It catalyses the reaction (R)-pantoate + beta-alanine + ATP = (R)-pantothenate + AMP + diphosphate + H(+). Its pathway is cofactor biosynthesis; (R)-pantothenate biosynthesis; (R)-pantothenate from (R)-pantoate and beta-alanine: step 1/1. Catalyzes the condensation of pantoate with beta-alanine in an ATP-dependent reaction via a pantoyl-adenylate intermediate. This chain is Pantothenate synthetase, found in Mycolicibacterium vanbaalenii (strain DSM 7251 / JCM 13017 / BCRC 16820 / KCTC 9966 / NRRL B-24157 / PYR-1) (Mycobacterium vanbaalenii).